Reading from the N-terminus, the 160-residue chain is MGVYTYENEFTSDIPAPKLFKAFVLDADNLIPKIAPQAVKCAEILEGDGGPGTIKKITFGEGSHYGYVKHKIHSIDKVNHTYSYSLIEGDALSENIEKIDYETKLVSAPHGGTIIKTTSKYHTKGDVEIKEEHVKAGKEKAAHLFKLIEGYLKDHPSEYN.

This sequence belongs to the BetVI family. Monomer. Interacts with AP. In terms of tissue distribution, highly expressed in roots. Expressed in open flowers. Expressed at low levels in leaves, flower buds and fruits.

In terms of biological role, involved in the control of flavonoid biosynthesis in fruits, probably by binding directly to natural flavonoids. Binds the natural flavonoid quercetin-3-O-glucuronide with affinities in the low micromolar range. In Fragaria ananassa (Strawberry), this protein is Major strawberry allergen Fra a 1-E.